Reading from the N-terminus, the 234-residue chain is Glucosamine-6-phosphate deaminase (234 aa).

D62 functions as the Proton acceptor; for enolization step in the catalytic mechanism. N128 (for ring-opening step) is an active-site residue. H130 functions as the Proton acceptor; for ring-opening step in the catalytic mechanism. E135 acts as the For ring-opening step in catalysis.

The protein belongs to the glucosamine/galactosamine-6-phosphate isomerase family. NagB subfamily.

It carries out the reaction alpha-D-glucosamine 6-phosphate + H2O = beta-D-fructose 6-phosphate + NH4(+). The protein operates within amino-sugar metabolism; N-acetylneuraminate degradation; D-fructose 6-phosphate from N-acetylneuraminate: step 5/5. In terms of biological role, catalyzes the reversible isomerization-deamination of glucosamine 6-phosphate (GlcN6P) to form fructose 6-phosphate (Fru6P) and ammonium ion. The polypeptide is Glucosamine-6-phosphate deaminase (Streptococcus pyogenes serotype M3 (strain ATCC BAA-595 / MGAS315)).